Consider the following 256-residue polypeptide: Thiazole synthase (256 aa).

The active-site Schiff-base intermediate with DXP is Lys95. Residues Gly156, 182 to 183 (AG), and 204 to 205 (NT) contribute to the 1-deoxy-D-xylulose 5-phosphate site.

This sequence belongs to the ThiG family. Homotetramer. Forms heterodimers with either ThiH or ThiS.

It localises to the cytoplasm. The enzyme catalyses [ThiS sulfur-carrier protein]-C-terminal-Gly-aminoethanethioate + 2-iminoacetate + 1-deoxy-D-xylulose 5-phosphate = [ThiS sulfur-carrier protein]-C-terminal Gly-Gly + 2-[(2R,5Z)-2-carboxy-4-methylthiazol-5(2H)-ylidene]ethyl phosphate + 2 H2O + H(+). Its pathway is cofactor biosynthesis; thiamine diphosphate biosynthesis. In terms of biological role, catalyzes the rearrangement of 1-deoxy-D-xylulose 5-phosphate (DXP) to produce the thiazole phosphate moiety of thiamine. Sulfur is provided by the thiocarboxylate moiety of the carrier protein ThiS. In vitro, sulfur can be provided by H(2)S. The protein is Thiazole synthase of Escherichia coli O127:H6 (strain E2348/69 / EPEC).